We begin with the raw amino-acid sequence, 514 residues long: DNA-(apurinic or apyrimidinic site) endonuclease 2 (514 aa).

Asparagine 8 and glutamate 48 together coordinate Mg(2+). Tyrosine 156 is a catalytic residue. Mg(2+)-binding residues include aspartate 197, asparagine 199, aspartate 303, and histidine 304. Aspartate 197 serves as the catalytic Proton donor/acceptor. The active-site Proton acceptor is the histidine 304. Residues 359 to 417 (PSNQTQVHMRKNKARVRSTRSRPSKTGSSRGQKNLMSYFQPSSSGPQTSNLDLPSLGTL) are disordered. Residues 366–381 (HMRKNKARVRSTRSRP) show a composition bias toward basic residues. A Glycyl lysine isopeptide (Lys-Gly) (interchain with G-Cter in ubiquitin) cross-link involves residue lysine 371. Polar residues predominate over residues 382–410 (SKTGSSRGQKNLMSYFQPSSSGPQTSNLD). Positions 390–397 (QKNLMSYF) are required for the interaction and colocalization with PCNA in nuclear foci in presence of oxidative-induced DNA damaging agents. Zn(2+) contacts are provided by cysteine 465, histidine 468, cysteine 491, and cysteine 505. A GRF-type zinc finger spans residues 465-514 (CGGHREPCVMRTVKKPGPNLGRHFYMCARPQGPPTDPSSRCNFFLWSRPS).

It belongs to the DNA repair enzymes AP/ExoA family. As to quaternary structure, interacts with PCNA; this interaction is triggered by reactive oxygen species and increased by misincorporation of uracil in nuclear DNA. Requires Mg(2+) as cofactor. Mn(2+) is required as a cofactor. In terms of processing, ubiquitinated by the CUL9-RBX1 complex. Ubiquitinated by MKRN3 at Lys-371 leading to proteasomal degradation.

Its subcellular location is the nucleus. The protein resides in the cytoplasm. It localises to the mitochondrion. It carries out the reaction Exonucleolytic cleavage in the 3'- to 5'-direction to yield nucleoside 5'-phosphates.. With respect to regulation, 3'-5' exonuclease activity is activated by sodium and manganese. 3'-5' exonuclease and 3'-phosphodiesterase activities are stimulated in presence of PCNA. Functions as a weak apurinic/apyrimidinic (AP) endodeoxyribonuclease in the DNA base excision repair (BER) pathway of DNA lesions induced by oxidative and alkylating agents. Initiates repair of AP sites in DNA by catalyzing hydrolytic incision of the phosphodiester backbone immediately adjacent to the damage, generating a single-strand break with 5'-deoxyribose phosphate and 3'-hydroxyl ends. Also displays double-stranded DNA 3'-5' exonuclease, 3'-phosphodiesterase activities. Shows robust 3'-5' exonuclease activity on 3'-recessed heteroduplex DNA and is able to remove mismatched nucleotides preferentially. Shows fairly strong 3'-phosphodiesterase activity involved in the removal of 3'-damaged termini formed in DNA by oxidative agents. In the nucleus functions in the PCNA-dependent BER pathway. Plays a role in reversing blocked 3' DNA ends, problematic lesions that preclude DNA synthesis. Required for somatic hypermutation (SHM) and DNA cleavage step of class switch recombination (CSR) of immunoglobulin genes. Required for proper cell cycle progression during proliferation of peripheral lymphocytes. This is DNA-(apurinic or apyrimidinic site) endonuclease 2 (APEX2) from Bos taurus (Bovine).